Reading from the N-terminus, the 394-residue chain is Quinolinate synthase (394 aa).

2 residues coordinate iminosuccinate: H57 and S74. C121 contacts [4Fe-4S] cluster. Iminosuccinate is bound by residues 153–155 and S174; that span reads YMN. [4Fe-4S] cluster is bound at residue C243. Residues 269–271 and T286 each bind iminosuccinate; that span reads HPE. C333 contacts [4Fe-4S] cluster.

The protein belongs to the quinolinate synthase family. Type 3 subfamily. Requires [4Fe-4S] cluster as cofactor.

The protein resides in the cytoplasm. The catalysed reaction is iminosuccinate + dihydroxyacetone phosphate = quinolinate + phosphate + 2 H2O + H(+). Its pathway is cofactor biosynthesis; NAD(+) biosynthesis; quinolinate from iminoaspartate: step 1/1. Catalyzes the condensation of iminoaspartate with dihydroxyacetone phosphate to form quinolinate. This is Quinolinate synthase from Corynebacterium glutamicum (strain ATCC 13032 / DSM 20300 / JCM 1318 / BCRC 11384 / CCUG 27702 / LMG 3730 / NBRC 12168 / NCIMB 10025 / NRRL B-2784 / 534).